Reading from the N-terminus, the 101-residue chain is Urease subunit beta (101 aa).

It belongs to the urease beta subunit family. As to quaternary structure, heterotrimer of UreA (gamma), UreB (beta) and UreC (alpha) subunits. Three heterotrimers associate to form the active enzyme.

It is found in the cytoplasm. It catalyses the reaction urea + 2 H2O + H(+) = hydrogencarbonate + 2 NH4(+). It participates in nitrogen metabolism; urea degradation; CO(2) and NH(3) from urea (urease route): step 1/1. This is Urease subunit beta from Allorhizobium ampelinum (strain ATCC BAA-846 / DSM 112012 / S4) (Agrobacterium vitis (strain S4)).